Here is a 291-residue protein sequence, read N- to C-terminus: RPE-retinal G protein-coupled receptor (291 aa).

The Extracellular segment spans residues 1–15 (MAETSALPTGFGELE). The chain crosses the membrane as a helical span at residues 16 to 36 (VLAVGMVLLVEALSGLSLNTL). Residues 37 to 52 (TIFSFCKTPELRTPCH) lie on the Cytoplasmic side of the membrane. Residues 53-73 (LLVLSLALADSGISLNALVAA) traverse the membrane as a helical segment. The Extracellular portion of the chain corresponds to 74 to 91 (TSSLLRRWPYGSDGCQAH). The cysteines at positions 88 and 162 are disulfide-linked. The helical transmembrane segment at 92–112 (GFQGFVTALASICSSAAIAWG) threads the bilayer. Residues 113-130 (RYHHYCTRSQLAWNSAVS) are Cytoplasmic-facing. The chain crosses the membrane as a helical span at residues 131-151 (LVLFVWLSSAFWAALPLLGWG). The Extracellular portion of the chain corresponds to 152 to 175 (HYDYEPLGTCCTLDYSKGDRNFTS). Asn-172 carries N-linked (GlcNAc...) asparagine glycosylation. A helical transmembrane segment spans residues 176 to 196 (FLFTMSFFNFAMPLFITITSY). The Cytoplasmic segment spans residues 197–219 (SLMEQKLGKSGHLQVNTTLPART). Residues 220-240 (LLLGWGPYAILYLYAVIADVT) traverse the membrane as a helical segment. The Extracellular portion of the chain corresponds to 241 to 247 (SISPKLQ). The helical transmembrane segment at 248–268 (MVPALIAKMVPTINAINYALG) threads the bilayer. Lys-255 carries the post-translational modification N6-(retinylidene)lysine. The Cytoplasmic segment spans residues 269-291 (NEMVCRGIWQCLSPQKREKDRTK).

It belongs to the G-protein coupled receptor 1 family. Opsin subfamily. Covalently binds all-trans- and 11-cis-retinal. Preferentially expressed at high levels in the retinal pigment epithelium (RPE) and Mueller cells of the neural retina.

Its subcellular location is the membrane. Receptor for all-trans- and 11-cis-retinal. Binds preferentially to the former and may catalyze the isomerization of the chromophore by a retinochrome-like mechanism. The sequence is that of RPE-retinal G protein-coupled receptor (RGR) from Homo sapiens (Human).